Consider the following 617-residue polypeptide: Proline--tRNA ligase (617 aa).

It belongs to the class-II aminoacyl-tRNA synthetase family. ProS type 1 subfamily. Homodimer.

It localises to the cytoplasm. The enzyme catalyses tRNA(Pro) + L-proline + ATP = L-prolyl-tRNA(Pro) + AMP + diphosphate. Its function is as follows. Catalyzes the attachment of proline to tRNA(Pro) in a two-step reaction: proline is first activated by ATP to form Pro-AMP and then transferred to the acceptor end of tRNA(Pro). As ProRS can inadvertently accommodate and process non-cognate amino acids such as alanine and cysteine, to avoid such errors it has two additional distinct editing activities against alanine. One activity is designated as 'pretransfer' editing and involves the tRNA(Pro)-independent hydrolysis of activated Ala-AMP. The other activity is designated 'posttransfer' editing and involves deacylation of mischarged Ala-tRNA(Pro). The misacylated Cys-tRNA(Pro) is not edited by ProRS. In Streptococcus pneumoniae (strain CGSP14), this protein is Proline--tRNA ligase.